The primary structure comprises 322 residues: HPr kinase/phosphorylase (322 aa).

Catalysis depends on residues histidine 146 and lysine 167. ATP is bound at residue glycine 161–serine 168. Serine 168 contacts Mg(2+). Aspartate 185 (proton acceptor; for phosphorylation activity. Proton donor; for dephosphorylation activity) is an active-site residue. Residues leucine 209 to aspartate 218 are important for the catalytic mechanism of both phosphorylation and dephosphorylation. Glutamate 210 serves as a coordination point for Mg(2+). Arginine 250 is an active-site residue. The tract at residues glutamine 271–arginine 276 is important for the catalytic mechanism of dephosphorylation.

It belongs to the HPrK/P family. Homohexamer. Mg(2+) serves as cofactor.

The catalysed reaction is [HPr protein]-L-serine + ATP = [HPr protein]-O-phospho-L-serine + ADP + H(+). The enzyme catalyses [HPr protein]-O-phospho-L-serine + phosphate + H(+) = [HPr protein]-L-serine + diphosphate. In terms of biological role, catalyzes the ATP- as well as the pyrophosphate-dependent phosphorylation of a specific serine residue in HPr, a phosphocarrier protein of the phosphoenolpyruvate-dependent sugar phosphotransferase system (PTS). HprK/P also catalyzes the pyrophosphate-producing, inorganic phosphate-dependent dephosphorylation (phosphorolysis) of seryl-phosphorylated HPr (P-Ser-HPr). In Burkholderia ambifaria (strain ATCC BAA-244 / DSM 16087 / CCUG 44356 / LMG 19182 / AMMD) (Burkholderia cepacia (strain AMMD)), this protein is HPr kinase/phosphorylase.